The chain runs to 174 residues: Secretion monitor (174 aa).

An N-terminal signal peptide occupies residues 1–35 (MGILNLWRQFGRRYFWSHLLLGVVAASIGAPTILA).

This sequence belongs to the SecM family.

The protein localises to the cytoplasm. It is found in the cytosol. It localises to the periplasm. Regulates secA expression by translational coupling of the secM secA operon. Translational pausing at a specific Pro residue 5 residues before the end of the protein may allow disruption of a mRNA repressor helix that normally suppresses secA translation initiation. The polypeptide is Secretion monitor (Photorhabdus laumondii subsp. laumondii (strain DSM 15139 / CIP 105565 / TT01) (Photorhabdus luminescens subsp. laumondii)).